The sequence spans 61 residues: L-amino-acid oxidase (61 aa).

Position 43-44 (43-44 (MA)) interacts with FAD.

It belongs to the flavin monoamine oxidase family. FIG1 subfamily. In terms of assembly, homodimer; non-covalently linked. FAD is required as a cofactor. N-glycosylated. As to expression, expressed by the venom gland.

The protein localises to the secreted. It catalyses the reaction an L-alpha-amino acid + O2 + H2O = a 2-oxocarboxylate + H2O2 + NH4(+). It carries out the reaction L-leucine + O2 + H2O = 4-methyl-2-oxopentanoate + H2O2 + NH4(+). Its function is as follows. Catalyzes an oxidative deamination of predominantly hydrophobic and aromatic L-amino acids, thus producing hydrogen peroxide that may contribute to the diverse toxic effects of this enzyme. Shows activity on L-Leu. Exhibits diverse biological activities, such as apoptosis, antibacterial activities against both Gram-negative and Gram-positive bacteria and antiparasitic activities, as well as induction of platelet aggregation. Effects of snake L-amino oxidases on platelets are controversial, since they either induce aggregation or inhibit agonist-induced aggregation. These different effects are probably due to different experimental conditions. This protein may also induce hemorrhage, hemolysis, and edema. In Crotalus durissus cascavella (Northeastern Brazilian rattlesnake), this protein is L-amino-acid oxidase.